A 332-amino-acid chain; its full sequence is UPF0194 membrane protein YbhG (332 aa).

The signal sequence occupies residues 1–16; sequence MMKKPVVIGLAVVVLA. Residues 107-209 adopt a coiled-coil conformation; the sequence is NEEIAQAAAA…LNLQDSTLIA (103 aa).

It belongs to the UPF0194 family.

It is found in the periplasm. The polypeptide is UPF0194 membrane protein YbhG (Escherichia coli (strain K12 / MC4100 / BW2952)).